The chain runs to 481 residues: Glutamyl-tRNA(Gln) amidotransferase subunit A (481 aa).

Catalysis depends on charge relay system residues lysine 76 and serine 151. Serine 175 functions as the Acyl-ester intermediate in the catalytic mechanism.

This sequence belongs to the amidase family. GatA subfamily. In terms of assembly, heterotrimer of A, B and C subunits.

The catalysed reaction is L-glutamyl-tRNA(Gln) + L-glutamine + ATP + H2O = L-glutaminyl-tRNA(Gln) + L-glutamate + ADP + phosphate + H(+). In terms of biological role, allows the formation of correctly charged Gln-tRNA(Gln) through the transamidation of misacylated Glu-tRNA(Gln) in organisms which lack glutaminyl-tRNA synthetase. The reaction takes place in the presence of glutamine and ATP through an activated gamma-phospho-Glu-tRNA(Gln). The polypeptide is Glutamyl-tRNA(Gln) amidotransferase subunit A (Neisseria meningitidis serogroup B (strain ATCC BAA-335 / MC58)).